A 129-amino-acid polypeptide reads, in one-letter code: 3-aminoacrylate deaminase RutC (129 aa).

This sequence belongs to the RutC family.

The enzyme catalyses (Z)-3-aminoacrylate + H2O + H(+) = 3-oxopropanoate + NH4(+). Its function is as follows. Involved in pyrimidine catabolism. Catalyzes the deamination of 3-aminoacrylate to malonic semialdehyde, a reaction that can also occur spontaneously. RutC may facilitate the reaction and modulate the metabolic fitness, rather than catalyzing essential functions. The sequence is that of 3-aminoacrylate deaminase RutC from Caulobacter sp. (strain K31).